We begin with the raw amino-acid sequence, 267 residues long: Putative hydro-lyase RALTA_B1245 (267 aa).

The protein belongs to the D-glutamate cyclase family.

The polypeptide is Putative hydro-lyase RALTA_B1245 (Cupriavidus taiwanensis (strain DSM 17343 / BCRC 17206 / CCUG 44338 / CIP 107171 / LMG 19424 / R1) (Ralstonia taiwanensis (strain LMG 19424))).